The primary structure comprises 517 residues: Protein MGF 505-2R (517 aa).

The protein belongs to the asfivirus MGF 505 family.

Functionally, plays a role in virus cell tropism, and may be required for efficient virus replication in macrophages. The polypeptide is Protein MGF 505-2R (African swine fever virus (isolate Warthog/Namibia/Wart80/1980) (ASFV)).